The primary structure comprises 613 residues: Dihydroxy-acid dehydratase (613 aa).

Asp81 provides a ligand contact to Mg(2+). A [2Fe-2S] cluster-binding site is contributed by Cys122. Residues Asp123 and Lys124 each coordinate Mg(2+). Lys124 carries the post-translational modification N6-carboxylysine. Cys195 contacts [2Fe-2S] cluster. Glu491 lines the Mg(2+) pocket. Ser517 serves as the catalytic Proton acceptor.

This sequence belongs to the IlvD/Edd family. In terms of assembly, homodimer. [2Fe-2S] cluster is required as a cofactor. Mg(2+) serves as cofactor.

The enzyme catalyses (2R)-2,3-dihydroxy-3-methylbutanoate = 3-methyl-2-oxobutanoate + H2O. It carries out the reaction (2R,3R)-2,3-dihydroxy-3-methylpentanoate = (S)-3-methyl-2-oxopentanoate + H2O. It participates in amino-acid biosynthesis; L-isoleucine biosynthesis; L-isoleucine from 2-oxobutanoate: step 3/4. The protein operates within amino-acid biosynthesis; L-valine biosynthesis; L-valine from pyruvate: step 3/4. Its function is as follows. Functions in the biosynthesis of branched-chain amino acids. Catalyzes the dehydration of (2R,3R)-2,3-dihydroxy-3-methylpentanoate (2,3-dihydroxy-3-methylvalerate) into 2-oxo-3-methylpentanoate (2-oxo-3-methylvalerate) and of (2R)-2,3-dihydroxy-3-methylbutanoate (2,3-dihydroxyisovalerate) into 2-oxo-3-methylbutanoate (2-oxoisovalerate), the penultimate precursor to L-isoleucine and L-valine, respectively. The sequence is that of Dihydroxy-acid dehydratase from Buchnera aphidicola subsp. Melaphis rhois.